The following is a 334-amino-acid chain: Fructose-1,6-bisphosphatase class 1 (334 aa).

Mg(2+)-binding residues include E90, D113, L115, and D116. Substrate-binding positions include 116–119 (DGSS), N209, Y242, and K272. E278 serves as a coordination point for Mg(2+).

The protein belongs to the FBPase class 1 family. As to quaternary structure, homotetramer. Mg(2+) is required as a cofactor.

It localises to the cytoplasm. It catalyses the reaction beta-D-fructose 1,6-bisphosphate + H2O = beta-D-fructose 6-phosphate + phosphate. The protein operates within carbohydrate biosynthesis; gluconeogenesis. In Haemophilus ducreyi (strain 35000HP / ATCC 700724), this protein is Fructose-1,6-bisphosphatase class 1.